A 532-amino-acid polypeptide reads, in one-letter code: Undecaprenyl-phosphate glucose phosphotransferase (532 aa).

5 helical membrane passes run Gln-81 to Trp-101, Glu-110 to Pro-130, Val-155 to Val-175, Trp-183 to His-203, and Thr-344 to Ile-364.

Belongs to the bacterial sugar transferase family.

It is found in the membrane. It catalyses the reaction di-trans,octa-cis-undecaprenyl phosphate + UDP-alpha-D-glucose = alpha-D-glucosyl di-trans,octa-cis-undecaprenyl diphosphate + UMP. Functionally, involved in the biosynthesis of the exopolysaccharide acetan, a water-soluble polysaccharide involved in production of bacterial cellulose (BC). In Komagataeibacter xylinus (Gluconacetobacter xylinus), this protein is Undecaprenyl-phosphate glucose phosphotransferase (aceA).